The sequence spans 476 residues: Monodehydroascorbate reductase 2, peroxisomal (476 aa).

The Cytoplasmic portion of the chain corresponds to 1–3 (MGR). The chain crosses the membrane as a helical span at residues 4 to 24 (AFVHVILGGGVAAGYAALEFA). Residues 12-15 (GGVA), E40, R47, K52, and 146-147 (RN) each bind FAD. Residues 25–447 (RRGGYSRGEL…GGLALGEKPT (423 aa)) lie on the Peroxisomal side of the membrane. Residues 171 to 177 (GGYIGME), E195, R201, and G260 each bind NAD(+). Residue 173–177 (YIGME) participates in NADP(+) binding. NADP(+) is bound by residues R201 and G260. Residue D297 coordinates FAD. 314–315 (EH) serves as a coordination point for NAD(+). NADP(+) is bound at residue 314–315 (EH). V316 provides a ligand contact to FAD. An L-ascorbate-binding site is contributed by R320. Y346 is an FAD binding site. An NAD(+)-binding site is contributed by Y346. Y346 lines the NADP(+) pocket. R348 contributes to the L-ascorbate binding site. A helical transmembrane segment spans residues 448–468 (YVWHATAGVIAAASIAAFGYW). Topologically, residues 469-476 (YGRKRRRW) are cytoplasmic.

Belongs to the FAD-dependent oxidoreductase family. Requires FAD as cofactor.

Its subcellular location is the peroxisome membrane. It carries out the reaction 2 monodehydro-L-ascorbate radical + NADH + H(+) = 2 L-ascorbate + NAD(+). Its function is as follows. Catalyzes the conversion of monodehydroascorbate to ascorbate, oxidizing NADH in the process. Ascorbate is a major antioxidant against reactive oxygen species (ROS) and nitric oxide (NO). This Oryza sativa subsp. japonica (Rice) protein is Monodehydroascorbate reductase 2, peroxisomal.